The chain runs to 149 residues: Large ribosomal subunit protein bL9 (149 aa).

The protein belongs to the bacterial ribosomal protein bL9 family.

In terms of biological role, binds to the 23S rRNA. The chain is Large ribosomal subunit protein bL9 from Klebsiella pneumoniae subsp. pneumoniae (strain ATCC 700721 / MGH 78578).